A 2216-amino-acid polypeptide reads, in one-letter code: MKEHPFPYKSWILELREIKNSHYFLDSWTKFNSVGSYINIFSHQERFIKLFDPRILSILLSRNSQGSTSNRYFTIKGVILFVVAVLIYRINNRNMVEIKNIYWRGLLPIPMNSIGPRNDTLEELVGSYNINRFIVSLLYLTKGKNISESFFLNLKESTLVLPITKKCSMPESNWGSRWWRNWTGKNRDYSCKISNETVAGIEILFKEKDKKYLEFIFFYYMDDPIRKDRDWELFDRLSPSKRLNKINFYSGPLFEILVKRRIYYLMSAFREKIPIEVVKGFFKQQKVGSTIQSNDIEHVSHFFSRNKRAISLKNSAQFNMWQFRQDLLVSWGENPHESDFLRNVSRANWIWLNNVWLVNKYRFCRKVRNVSSNIKYKYDSTRSRSSFVQVTDSSQLKGSYYKSSGHFYSVISNEDSEYHTLINQREIKPLKSIFFDPSFLQTEATEIESDQLQKRPSGYSSTLFTEHEKQMINHMLPEEIEEFIGNPTRLVHSFLSDRWSELHLGSNPTERSTRDHKLLKKQQDLSFVPSRRSENKELVNILKIITYLKNTVSIHPISSDPGCDGVLKDEPDMDSSNKISVFNKNTFIYLFHLFHDWNRVGYTLNLHHDFELEERFQEKADLFTLSITEPDLVYHKGFSFSIYMDQKQKMVVFASNNIMEAVNQSRFIRNMIKIQYSTYGYIRNVLHRFFLMNRSDHNLEYEIKRDQIGKDTLNHRTIIKYMINQHLSNFKKSQNKWFNPILFFSRTERSVNRNPDAYRYKRSNGSNNFLEHLEHFVSEQKSHFKFKIVFDLIRFNQYSIDWSAFIDTKDLSKPLRFFLSKLLFFLSNSLPFFCVSFGNIPIHRSEIYIYELKDPNDQLCNQFLEPIDLKIVHLKKRKPFLLGYHGTSRKLKLLITGGRPFLFNKIPRCMIDSFHTINNRSKSFDNTDSYLSMIFHNKDNWLNLVKPFHRSSLISYFYKANRLQFLNNPHNFCFYCNTRLPFYVEKAHIHNYYFTYGQFLNILFIRNKIFSLCVDKKKHAFWGGRDTISPIESQVSKIFIPKNFPQSGDETYNLSQPFHFPSRYDPFVRLIANIYGTPLTEGQIVNLGRTYCQPLSDMNLSDSEGKNFHQYLNFNSNMGLIHTPCSDKYLPSEKRKKRSLCINKYKCVEKGQMYRTFQRKVAFSTLSKWNLFQTYMPWFLTSAGYKYINLIFLDTFSELLSILSSSKKFVSIFNNIMHGSGISWRIINKKRCLPQWNLISEISSKCLHNLLLSEETIRQNNESPLISTHLRSPNVREFLYSILFLLLVVGYLVRTHLLFVSRASSELQTEFKRVKSLMIPSSMIELRKLLNRYPTPASNSFWLKNLFIVAMEQLVYSLEEIRASGGNLLGPAYGVKSICSKNKYFNINLIDLIPNPINRIIFSRNMRHLSHTSKEIYSLIRKRKNVNGDWIDDIIESWVANSDSIDDEEREFLVQFSALTTEKRIYQILLSLTHSDHLSKNDSGYKMIEQPGAIYLRYLVDIHKKYLLNYECNTSCLVERRVFLAHSQTITYSQTSRGTNTLHFPSQGKPFSISLALSPSKGILVIGSIGTGRSFLVKYLATNSYVPFITVFLNKFLDNKPKGFLVDDNDDNDSSDDIYASDDINSDLDTELELITMMNALTMDMMLELDRFFTTLQLELAKAMSPWIIWIPNIHDLDVNESNYLSFGLLVNHLSERCSTNNIIVIASTHIPKKVDPALLAPNKLNTCIKIRRLLIPQQRKHFCTLSYTRGFHLENKIFHTNGFGSITMGSSARDLVALTNEALSISITQNKSILDTNTIRSALHRQTWDLRSGVRSFQDNGILSYQIGRAITQNVLLSNCPIDPISIYMKKKSCTCNGGDYYFYKWYFGLGTSMKKLTILLYLLSCSAGSVAQDLWSLPGPAEKNGITSYGLVENDSDLVRGLLEVEGALVGSSRTEKDCSPFDNDRVIFTLILRPEPGNPLDIIKKGSCSIFDHRFIYEKYESEFEEGYGEGALDPQQIEEDLFNHIVWAPRIWRPWGFIFYCIERPNELGFPYWSRSFRGKRIVYDKDEEGELQENDSELLKSGTVQYQTRDRSSKEQGLLKINQFIWDPADPLFFLLKDQPPGSVFSHRRFFADEEMSKGLLTSQKDPPTSIYKRWFIKNTQEQHFELLINRQRWLRTKSSLSKSNGSFRSNTLFESYQYLSTLFLSNGTLFDKMTKTLLIKRWLFPDEMQM.

1567-1574 contributes to the ATP binding site; the sequence is GSIGTGRS.

This sequence belongs to the Ycf2 family.

The protein localises to the plastid stroma. Its function is as follows. Probable ATPase of unknown function. Its presence in a non-photosynthetic plant (Epifagus virginiana) and experiments in tobacco indicate that it has an essential function which is probably not related to photosynthesis. In Epifagus virginiana (Beechdrops), this protein is Protein Ycf2.